Reading from the N-terminus, the 217-residue chain is Adenylate kinase (217 aa).

10-15 is an ATP binding site; that stretch reads GAGKGT. The interval 30–59 is NMP; that stretch reads STGDIFRQNLRDNTDLGKLAKEYMDKGLLV. AMP contacts are provided by residues threonine 31, arginine 36, 57–59, 85–88, and glutamine 92; these read LLV and GYPR. Positions 126-163 are LID; the sequence is GRRVCPNCGATYHIKTSPPAVDNVCDKCGAQLIQRSDD. ATP is bound at residue arginine 127. Zn(2+)-binding residues include cysteine 130 and cysteine 133. Residue 136 to 137 coordinates ATP; that stretch reads TY. Zn(2+) is bound by residues cysteine 150 and cysteine 153. Residues arginine 160 and arginine 171 each coordinate AMP. Lysine 199 serves as a coordination point for ATP.

The protein belongs to the adenylate kinase family. Monomer.

The protein localises to the cytoplasm. The catalysed reaction is AMP + ATP = 2 ADP. Its pathway is purine metabolism; AMP biosynthesis via salvage pathway; AMP from ADP: step 1/1. Catalyzes the reversible transfer of the terminal phosphate group between ATP and AMP. Plays an important role in cellular energy homeostasis and in adenine nucleotide metabolism. The sequence is that of Adenylate kinase from Thermoanaerobacter pseudethanolicus (strain ATCC 33223 / 39E) (Clostridium thermohydrosulfuricum).